The chain runs to 313 residues: Ribosomal RNA small subunit methyltransferase H (313 aa).

S-adenosyl-L-methionine is bound by residues 35–37 (GGH), Asp-55, Phe-81, Asp-103, and Gln-110.

The protein belongs to the methyltransferase superfamily. RsmH family.

The protein localises to the cytoplasm. It carries out the reaction cytidine(1402) in 16S rRNA + S-adenosyl-L-methionine = N(4)-methylcytidine(1402) in 16S rRNA + S-adenosyl-L-homocysteine + H(+). In terms of biological role, specifically methylates the N4 position of cytidine in position 1402 (C1402) of 16S rRNA. This chain is Ribosomal RNA small subunit methyltransferase H, found in Pseudomonas aeruginosa (strain ATCC 15692 / DSM 22644 / CIP 104116 / JCM 14847 / LMG 12228 / 1C / PRS 101 / PAO1).